A 332-amino-acid chain; its full sequence is 2,3-diketo-L-gulonate reductase (332 aa).

H44 (proton donor) is an active-site residue. NAD(+) contacts are provided by residues 168 to 174, 224 to 225, and 304 to 306; these read ITMVDMS, WK, and GHE.

This sequence belongs to the LDH2/MDH2 oxidoreductase family. DlgD subfamily. Homodimer.

It is found in the cytoplasm. The enzyme catalyses 3-dehydro-L-gulonate + NAD(+) = 2,3-dioxo-L-gulonate + NADH + H(+). The catalysed reaction is 3-dehydro-L-gulonate + NADP(+) = 2,3-dioxo-L-gulonate + NADPH + H(+). Its function is as follows. Catalyzes the reduction of 2,3-diketo-L-gulonate in the presence of NADH, to form 3-keto-L-gulonate. The chain is 2,3-diketo-L-gulonate reductase from Escherichia coli (strain K12 / MC4100 / BW2952).